Consider the following 178-residue polypeptide: Large ribosomal subunit protein uL6 (178 aa).

It belongs to the universal ribosomal protein uL6 family. In terms of assembly, part of the 50S ribosomal subunit.

In terms of biological role, this protein binds to the 23S rRNA, and is important in its secondary structure. It is located near the subunit interface in the base of the L7/L12 stalk, and near the tRNA binding site of the peptidyltransferase center. This is Large ribosomal subunit protein uL6 from Tropheryma whipplei (strain TW08/27) (Whipple's bacillus).